A 388-amino-acid polypeptide reads, in one-letter code: Arginine biosynthesis bifunctional protein ArgJ (388 aa).

The substrate site is built by T150, K172, T183, E263, N383, and S388. T183 functions as the Nucleophile in the catalytic mechanism.

This sequence belongs to the ArgJ family. In terms of assembly, heterotetramer of two alpha and two beta chains.

Its subcellular location is the cytoplasm. It carries out the reaction N(2)-acetyl-L-ornithine + L-glutamate = N-acetyl-L-glutamate + L-ornithine. The enzyme catalyses L-glutamate + acetyl-CoA = N-acetyl-L-glutamate + CoA + H(+). It functions in the pathway amino-acid biosynthesis; L-arginine biosynthesis; L-ornithine and N-acetyl-L-glutamate from L-glutamate and N(2)-acetyl-L-ornithine (cyclic): step 1/1. Its pathway is amino-acid biosynthesis; L-arginine biosynthesis; N(2)-acetyl-L-ornithine from L-glutamate: step 1/4. Its function is as follows. Catalyzes two activities which are involved in the cyclic version of arginine biosynthesis: the synthesis of N-acetylglutamate from glutamate and acetyl-CoA as the acetyl donor, and of ornithine by transacetylation between N(2)-acetylornithine and glutamate. The protein is Arginine biosynthesis bifunctional protein ArgJ of Corynebacterium glutamicum (strain ATCC 13032 / DSM 20300 / JCM 1318 / BCRC 11384 / CCUG 27702 / LMG 3730 / NBRC 12168 / NCIMB 10025 / NRRL B-2784 / 534).